A 252-amino-acid chain; its full sequence is uncharacterized protein (252 aa).

Residues Met-1–Ala-23 form the signal peptide. The interval Glu-231 to Met-252 is disordered.

This is an uncharacterized protein from Escherichia coli (strain K12).